The primary structure comprises 476 residues: MDNIDNKYNPQLCKIFLAISDLIFFNLALWFSLGCVYFIFDQVQRFIPQDQLDTRVITHFILSVVCVGWFWIRLRHYTYRKPFWYELKEIFRTIVIFAIFDLALIAFTKWQFSRYVWVFCWTFALILVPFFRALTKHLLNKLGIWKKKTIILGSGQNARGAYSALQSEEMMGFDVIAFFDTDASDAEINMLPVIKDTEIIWDLNRTGDVHYILAYEYTELEKTHFWLRELSKHHCRSVTVVPSFRGLPLYNTDMSFIFSHEVMLLRIQNNLAKRSSRFLKRTFDIVCSIMILIIASPLMIYLWYKVTRDGGPAIYGHQRVGRHGKLFPCYKFRSMVMNSQEVLKELLANDPIARAEWEKDFKLKNDPRITAVGRFIRKTSLDELPQLFNVLKGDMSLVGPRPIVSDELERYCDDVDYYLMAKPGMTGLWQVSGRNDVDYDTRVYFDSWYVKNWTLWNDIAILFKTAKVVLRRDGAY.

The next 5 membrane-spanning stretches (helical) occupy residues 15-35 (IFLAISDLIFFNLALWFSLGC), 52-72 (LDTRVITHFILSVVCVGWFWI), 93-113 (TIVIFAIFDLALIAFTKWQFS), 115-135 (YVWVFCWTFALILVPFFRALT), and 283-303 (FDIVCSIMILIIASPLMIYLW). The Cytoplasmic segment spans residues 304-476 (YKVTRDGGPA…KVVLRRDGAY (173 aa)).

The protein belongs to the bacterial sugar transferase family.

The protein localises to the cell inner membrane. The catalysed reaction is di-trans,octa-cis-undecaprenyl phosphate + UDP-alpha-D-galactose = alpha-D-galactosyl-di-trans,octa-cis-undecaprenyl diphosphate + UMP. It participates in bacterial outer membrane biogenesis; LPS O-antigen biosynthesis. Its function is as follows. Is responsible for transferring galactose-1-phosphate to the lipid precursor undecaprenol phosphate in the first steps of O-polysaccharide biosynthesis. This is Undecaprenyl-phosphate galactose phosphotransferase (rfbP) from Salmonella typhimurium (strain LT2 / SGSC1412 / ATCC 700720).